Consider the following 531-residue polypeptide: Histone-arginine methyltransferase CARMER (531 aa).

The 310-residue stretch at Ala141–His450 folds into the SAM-dependent MTase PRMT-type domain. S-adenosyl-L-methionine contacts are provided by Gln154, Arg163, Gly187, Glu209, Glu238, and Thr266. Position 501 is an asymmetric dimethylarginine; by autocatalysis (Arg501).

It belongs to the class I-like SAM-binding methyltransferase superfamily. Protein arginine N-methyltransferase family. In terms of assembly, homodimer. The dimethylated protein is the major form.

The protein resides in the cytoplasm. It is found in the nucleus. The catalysed reaction is L-arginyl-[protein] + 2 S-adenosyl-L-methionine = N(omega),N(omega)-dimethyl-L-arginyl-[protein] + 2 S-adenosyl-L-homocysteine + 2 H(+). Methylates (mono- and asymmetric dimethylation) the guanidino nitrogens of arginyl residues in proteins. May methylate histone H3 at 'Arg-17' and activate transcription via chromatin remodeling. This Drosophila ananassae (Fruit fly) protein is Histone-arginine methyltransferase CARMER (Art4).